A 300-amino-acid chain; its full sequence is GTPase Era (300 aa).

Residues 8 to 176 form the Era-type G domain; sequence RCGYVAIVGR…ERLVAGRLPQ (169 aa). The segment at 16–23 is G1; that stretch reads GRPNVGKS. 16–23 is a GTP binding site; that stretch reads GRPNVGKS. The tract at residues 42–46 is G2; that stretch reads QTTRH. The interval 63–66 is G3; sequence DTPG. Residues 63-67 and 125-128 contribute to the GTP site; these read DTPGL and NKAD. Residues 125–128 are G4; the sequence is NKAD. Residues 155 to 157 form a G5 region; the sequence is ISA. In terms of domain architecture, KH type-2 spans 199–283; that stretch reads VREKIMRQLG…MLNLWVKVKG (85 aa).

Belongs to the TRAFAC class TrmE-Era-EngA-EngB-Septin-like GTPase superfamily. Era GTPase family. In terms of assembly, monomer.

The protein resides in the cytoplasm. It is found in the cell inner membrane. Functionally, an essential GTPase that binds both GDP and GTP, with rapid nucleotide exchange. Plays a role in 16S rRNA processing and 30S ribosomal subunit biogenesis and possibly also in cell cycle regulation and energy metabolism. The sequence is that of GTPase Era from Azotobacter vinelandii (strain DJ / ATCC BAA-1303).